Here is a 245-residue protein sequence, read N- to C-terminus: Exosome complex component RRP41 (245 aa).

Ala2 is subject to N-acetylalanine.

It belongs to the RNase PH family. As to quaternary structure, component of the RNA exosome core complex (Exo-9), composed of EXOSC1, EXOSC2, EXOSC3, EXOSC4, EXOSC5, EXOSC6, EXOSC7, EXOSC8 and EXOSC9; within the complex interacts with EXOSC2, EXOSC7 and EXOSC9. The catalytically inactive RNA exosome core complex (Exo-9) associates with the catalytic subunit EXOSC10/RRP6. Exo-9 may associate with DIS3 to form the nucleolar exosome complex, or DIS3L to form the cytoplasmic exosome complex. Exo-9 is formed by a hexameric base ring consisting of the heterodimers EXOSC4-EXOSC9, EXOSC5-EXOSC8 and EXOSC6-EXOSC7, and a cap ring consisting of EXOSC1, EXOSC2 and EXOSC3. The RNA exosome complex associates with cofactors C1D/RRP47, MPHOSPH6/MPP6 and MTREX/MTR4. Interacts with DDX60. Interacts with DIS3; the interaction is direct.

It localises to the cytoplasm. It is found in the nucleus. Its subcellular location is the nucleolus. The protein localises to the nucleoplasm. Non-catalytic component of the RNA exosome complex which has 3'-&gt;5' exoribonuclease activity and participates in a multitude of cellular RNA processing and degradation events. In the nucleus, the RNA exosome complex is involved in proper maturation of stable RNA species such as rRNA, snRNA and snoRNA, in the elimination of RNA processing by-products and non-coding 'pervasive' transcripts, such as antisense RNA species and promoter-upstream transcripts (PROMPTs), and of mRNAs with processing defects, thereby limiting or excluding their export to the cytoplasm. The RNA exosome may be involved in Ig class switch recombination (CSR) and/or Ig variable region somatic hypermutation (SHM) by targeting AICDA deamination activity to transcribed dsDNA substrates. In the cytoplasm, the RNA exosome complex is involved in general mRNA turnover and specifically degrades inherently unstable mRNAs containing AU-rich elements (AREs) within their 3' untranslated regions, and in RNA surveillance pathways, preventing translation of aberrant mRNAs. It seems to be involved in degradation of histone mRNA. The catalytic inactive RNA exosome core complex of 9 subunits (Exo-9) is proposed to play a pivotal role in the binding and presentation of RNA for ribonucleolysis, and to serve as a scaffold for the association with catalytic subunits and accessory proteins or complexes. EXOSC4 binds to ARE-containing RNAs. The polypeptide is Exosome complex component RRP41 (EXOSC4) (Bos taurus (Bovine)).